The sequence spans 266 residues: MVCLKLPGGSYMAKLTVTLMVLSSPLALAGDTRPRFLQQDKYECHFFNGTERVRFLHRDIYNQEEDLRFDSDVGEYRAVTELGRPDAEYWNSQKDFLEDRRAAVDTYCRHNYGVGESFTVQRRVEPKVTVYPARTQTLQHHNLLVCSVNGFYPGSIEVRWFRNSQEEKAGVVSTGLIQNGDWTFQTLVMLETVPRSGEVYTCQVEHPSVTSPLTVEWRAQSESAQSKMLSGVGGFVLGLLFLGAGLFIYFKNQKGHSGLHPTGLVS.

The first 29 residues, 1-29 (MVCLKLPGGSYMAKLTVTLMVLSSPLALA), serve as a signal peptide directing secretion. The segment at 30–124 (GDTRPRFLQQ…GESFTVQRRV (95 aa)) is beta-1. The Extracellular portion of the chain corresponds to 30-227 (GDTRPRFLQQ…RAQSESAQSK (198 aa)). 2 disulfides stabilise this stretch: C44-C108 and C146-C202. The N-linked (GlcNAc...) asparagine glycan is linked to N48. The beta-2 stretch occupies residues 125 to 227 (EPKVTVYPAR…RAQSESAQSK (103 aa)). Residues 126–214 (PKVTVYPART…EHPSVTSPLT (89 aa)) form the Ig-like C1-type domain. A helical transmembrane segment spans residues 228 to 248 (MLSGVGGFVLGLLFLGAGLFI). The Cytoplasmic portion of the chain corresponds to 249 to 266 (YFKNQKGHSGLHPTGLVS).

This sequence belongs to the MHC class II family. In terms of assembly, heterodimer of an alpha and a beta subunit; also referred as MHC class II molecule. In the endoplasmic reticulum (ER) it forms a heterononamer; 3 MHC class II molecules bind to a CD74 homotrimer (also known as invariant chain or HLA class II histocompatibility antigen gamma chain). In the endosomal/lysosomal system; CD74 undergoes sequential degradation by various proteases; leaving a small fragment termed CLIP on each MHC class II molecule. MHC class II molecule interacts with HLA_DM, and HLA_DO in B-cells, in order to release CLIP and facilitate the binding of antigenic peptides. In terms of processing, ubiquitinated by MARCH1 and MARCH8 at Lys-254 leading to down-regulation of MHC class II.

It localises to the cell membrane. It is found in the endoplasmic reticulum membrane. The protein resides in the golgi apparatus. The protein localises to the trans-Golgi network membrane. Its subcellular location is the endosome membrane. It localises to the lysosome membrane. It is found in the late endosome membrane. In terms of biological role, binds peptides derived from antigens that access the endocytic route of antigen presenting cells (APC) and presents them on the cell surface for recognition by the CD4 T-cells. The peptide binding cleft accommodates peptides of 10-30 residues. The peptides presented by MHC class II molecules are generated mostly by degradation of proteins that access the endocytic route, where they are processed by lysosomal proteases and other hydrolases. Exogenous antigens that have been endocytosed by the APC are thus readily available for presentation via MHC II molecules, and for this reason this antigen presentation pathway is usually referred to as exogenous. As membrane proteins on their way to degradation in lysosomes as part of their normal turn-over are also contained in the endosomal/lysosomal compartments, exogenous antigens must compete with those derived from endogenous components. Autophagy is also a source of endogenous peptides, autophagosomes constitutively fuse with MHC class II loading compartments. In addition to APCs, other cells of the gastrointestinal tract, such as epithelial cells, express MHC class II molecules and CD74 and act as APCs, which is an unusual trait of the GI tract. To produce a MHC class II molecule that presents an antigen, three MHC class II molecules (heterodimers of an alpha and a beta chain) associate with a CD74 trimer in the ER to form a heterononamer. Soon after the entry of this complex into the endosomal/lysosomal system where antigen processing occurs, CD74 undergoes a sequential degradation by various proteases, including CTSS and CTSL, leaving a small fragment termed CLIP (class-II-associated invariant chain peptide). The removal of CLIP is facilitated by HLA-DM via direct binding to the alpha-beta-CLIP complex so that CLIP is released. HLA-DM stabilizes MHC class II molecules until primary high affinity antigenic peptides are bound. The MHC II molecule bound to a peptide is then transported to the cell membrane surface. In B-cells, the interaction between HLA-DM and MHC class II molecules is regulated by HLA-DO. Primary dendritic cells (DCs) also to express HLA-DO. Lysosomal microenvironment has been implicated in the regulation of antigen loading into MHC II molecules, increased acidification produces increased proteolysis and efficient peptide loading. The chain is HLA class II histocompatibility antigen, DR beta 5 chain from Homo sapiens (Human).